The following is a 272-amino-acid chain: Magnetosome protein MamQ (272 aa).

Topologically, residues 1-46 (MAVSDADASSVDKVESITLQRVKQSEELLAQLYVVEESPRRMGRGP) are cytoplasmic. A helical membrane pass occupies residues 47–67 (VQLMLAISVLSLVAFITTLLM). The Lumenal portion of the chain corresponds to 68 to 272 (RYNAFVTMYE…PLTHSQESKN (205 aa)).

The protein belongs to the LemA family.

The protein localises to the magnetosome membrane. Its subcellular location is the cell inner membrane. Functionally, essential for magnetosome formation. Not essential for formation of magnetosome membrane vesicles. One of 7 genes (mamLQBIEMO) able to induce magnetosome membrane biogenesis; coexpression of mamLQRBIEMO in a deletion of the 17 gene mamAB operon restores magnetosome vesicle formation but not magnetite biosynthesis. The chain is Magnetosome protein MamQ from Magnetospirillum gryphiswaldense (strain DSM 6361 / JCM 21280 / NBRC 15271 / MSR-1).